Here is a 254-residue protein sequence, read N- to C-terminus: Ribonuclease HII (254 aa).

An RNase H type-2 domain is found at 70-254 (QAIAGIDEVG…TFEPVKSMLG (185 aa)). D76, E77, and D168 together coordinate a divalent metal cation.

Belongs to the RNase HII family. Requires Mn(2+) as cofactor. Mg(2+) is required as a cofactor.

The protein resides in the cytoplasm. It carries out the reaction Endonucleolytic cleavage to 5'-phosphomonoester.. In terms of biological role, endonuclease that specifically degrades the RNA of RNA-DNA hybrids. This Streptococcus gordonii (strain Challis / ATCC 35105 / BCRC 15272 / CH1 / DL1 / V288) protein is Ribonuclease HII.